A 348-amino-acid chain; its full sequence is Dihydroorotate dehydrogenase (quinone) (348 aa).

FMN-binding positions include 65 to 69 and T89; that span reads AGMDK. K69 lines the substrate pocket. 114–118 lines the substrate pocket; sequence NRMGF. Positions 143 and 176 each coordinate FMN. N176 is a substrate binding site. Catalysis depends on S179, which acts as the Nucleophile. N181 contacts substrate. FMN is bound by residues K221 and T249. 250-251 serves as a coordination point for substrate; sequence NT. FMN contacts are provided by residues G272, G301, and 322–323; that span reads YT.

Belongs to the dihydroorotate dehydrogenase family. Type 2 subfamily. Monomer. Requires FMN as cofactor.

The protein localises to the cell membrane. The catalysed reaction is (S)-dihydroorotate + a quinone = orotate + a quinol. The protein operates within pyrimidine metabolism; UMP biosynthesis via de novo pathway; orotate from (S)-dihydroorotate (quinone route): step 1/1. In terms of biological role, catalyzes the conversion of dihydroorotate to orotate with quinone as electron acceptor. This chain is Dihydroorotate dehydrogenase (quinone), found in Akkermansia muciniphila (strain ATCC BAA-835 / DSM 22959 / JCM 33894 / BCRC 81048 / CCUG 64013 / CIP 107961 / Muc).